Reading from the N-terminus, the 340-residue chain is HPr kinase/phosphorylase (340 aa).

Residues His153 and Lys174 contribute to the active site. 168–175 provides a ligand contact to ATP; it reads GRSGIGKS. Position 175 (Ser175) interacts with Mg(2+). Asp192 functions as the Proton acceptor; for phosphorylation activity. Proton donor; for dephosphorylation activity in the catalytic mechanism. The important for the catalytic mechanism of both phosphorylation and dephosphorylation stretch occupies residues 216–225; the sequence is MEIRGLGIID. Residue Glu217 participates in Mg(2+) binding. Arg258 is an active-site residue. Residues 279–284 are important for the catalytic mechanism of dephosphorylation; sequence PIYPGK.

It belongs to the HPrK/P family. Homohexamer. Mg(2+) is required as a cofactor.

The enzyme catalyses [HPr protein]-L-serine + ATP = [HPr protein]-O-phospho-L-serine + ADP + H(+). It carries out the reaction [HPr protein]-O-phospho-L-serine + phosphate + H(+) = [HPr protein]-L-serine + diphosphate. Its function is as follows. Catalyzes the ATP- as well as the pyrophosphate-dependent phosphorylation of a specific serine residue in HPr, a phosphocarrier protein of the phosphoenolpyruvate-dependent sugar phosphotransferase system (PTS). HprK/P also catalyzes the pyrophosphate-producing, inorganic phosphate-dependent dephosphorylation (phosphorolysis) of seryl-phosphorylated HPr (P-Ser-HPr). The chain is HPr kinase/phosphorylase from Chloroherpeton thalassium (strain ATCC 35110 / GB-78).